Reading from the N-terminus, the 339-residue chain is NADH-quinone oxidoreductase subunit H (339 aa).

Transmembrane regions (helical) follow at residues 10 to 30 (FPLI…ILCV), 50 to 70 (PNVV…KLLF), 82 to 102 (ILFI…WAVV), 115 to 135 (VGVL…IIAG), 161 to 181 (MGLV…SGII), 187 to 207 (IPWW…ISVL), 235 to 255 (MGFA…SAMT), 275 to 295 (IPGF…FLWI), and 310 to 330 (LGWK…SSVL).

This sequence belongs to the complex I subunit 1 family. NDH-1 is composed of 14 different subunits. Subunits NuoA, H, J, K, L, M, N constitute the membrane sector of the complex.

The protein localises to the cell inner membrane. The catalysed reaction is a quinone + NADH + 5 H(+)(in) = a quinol + NAD(+) + 4 H(+)(out). In terms of biological role, NDH-1 shuttles electrons from NADH, via FMN and iron-sulfur (Fe-S) centers, to quinones in the respiratory chain. The immediate electron acceptor for the enzyme in this species is believed to be ubiquinone. Couples the redox reaction to proton translocation (for every two electrons transferred, four hydrogen ions are translocated across the cytoplasmic membrane), and thus conserves the redox energy in a proton gradient. This subunit may bind ubiquinone. This Rickettsia canadensis (strain McKiel) protein is NADH-quinone oxidoreductase subunit H.